Reading from the N-terminus, the 90-residue chain is UPF0297 protein Swol_0469 (90 aa).

The protein belongs to the UPF0297 family.

This is UPF0297 protein Swol_0469 from Syntrophomonas wolfei subsp. wolfei (strain DSM 2245B / Goettingen).